The primary structure comprises 177 residues: Large ribosomal subunit protein uL6 (177 aa).

Residue lysine 44 is modified to N6-acetyllysine.

The protein belongs to the universal ribosomal protein uL6 family. As to quaternary structure, part of the 50S ribosomal subunit.

In terms of biological role, this protein binds to the 23S rRNA, and is important in its secondary structure. It is located near the subunit interface in the base of the L7/L12 stalk, and near the tRNA binding site of the peptidyltransferase center. The polypeptide is Large ribosomal subunit protein uL6 (Escherichia fergusonii (strain ATCC 35469 / DSM 13698 / CCUG 18766 / IAM 14443 / JCM 21226 / LMG 7866 / NBRC 102419 / NCTC 12128 / CDC 0568-73)).